Here is a 372-residue protein sequence, read N- to C-terminus: Cytochrome b (372 aa).

4 helical membrane-spanning segments follow: residues 25 to 45 (FGSM…FLAI), 69 to 90 (WIMQ…YIHI), 105 to 125 (WLSG…GYVL), and 170 to 190 (FFAL…IHII). Heme b is bound by residues His75 and His89. Positions 174 and 188 each coordinate heme b. Position 193 (His193) interacts with a ubiquinone. Transmembrane regions (helical) follow at residues 218–238 (YKDM…LSFS), 280–300 (LGGT…PFTH), 312–332 (LSQI…WTAT), and 339–358 (FISI…IMNP).

Belongs to the cytochrome b family. As to quaternary structure, the cytochrome bc1 complex contains 3 respiratory subunits (MT-CYB, CYC1 and UQCRFS1), 2 core proteins (UQCRC1 and UQCRC2) and probably 6 low-molecular weight proteins. Heme b is required as a cofactor.

It is found in the mitochondrion inner membrane. Component of the ubiquinol-cytochrome c reductase complex (complex III or cytochrome b-c1 complex) that is part of the mitochondrial respiratory chain. The b-c1 complex mediates electron transfer from ubiquinol to cytochrome c. Contributes to the generation of a proton gradient across the mitochondrial membrane that is then used for ATP synthesis. This is Cytochrome b (MT-CYB) from Walterinnesia aegyptia (Desert black snake).